The sequence spans 174 residues: MLDREGYRPNVGIILINERNEVFWGKRVREHSWQFPQGGIKPGESPETAMYRELYEEVGLLPQHVKIVGRTRDWLRYDVPNNWVRREWRGSYRGQKQIWYLLRLTGRDCDVNLRATRHPEFDGWRWHQYWAPVDEVIEFKRDVYLGALKELSSRFLRGMESYEDFAARQPSGNR.

One can recognise a Nudix hydrolase domain in the interval 6 to 149; the sequence is GYRPNVGIIL…KRDVYLGALK (144 aa). The Nudix box motif lies at 38–59; the sequence is GGIKPGESPETAMYRELYEEVG.

The protein belongs to the Nudix hydrolase family. RppH subfamily. A divalent metal cation is required as a cofactor.

Its function is as follows. Accelerates the degradation of transcripts by removing pyrophosphate from the 5'-end of triphosphorylated RNA, leading to a more labile monophosphorylated state that can stimulate subsequent ribonuclease cleavage. The chain is RNA pyrophosphohydrolase from Neisseria meningitidis serogroup C (strain 053442).